Reading from the N-terminus, the 208-residue chain is Small ribosomal subunit protein uS4 (208 aa).

Residues 98–158 (RRLDNVVYRL…EKSRKIACIN (61 aa)) form the S4 RNA-binding domain.

This sequence belongs to the universal ribosomal protein uS4 family. As to quaternary structure, part of the 30S ribosomal subunit. Contacts protein S5. The interaction surface between S4 and S5 is involved in control of translational fidelity.

Functionally, one of the primary rRNA binding proteins, it binds directly to 16S rRNA where it nucleates assembly of the body of the 30S subunit. In terms of biological role, with S5 and S12 plays an important role in translational accuracy. The sequence is that of Small ribosomal subunit protein uS4 from Geobacter sulfurreducens (strain ATCC 51573 / DSM 12127 / PCA).